Reading from the N-terminus, the 310-residue chain is Ribosomal RNA small subunit methyltransferase H (310 aa).

S-adenosyl-L-methionine-binding positions include 33–35, Asp-53, Phe-79, Asp-100, and Gln-107; that span reads AGH.

It belongs to the methyltransferase superfamily. RsmH family.

Its subcellular location is the cytoplasm. It carries out the reaction cytidine(1402) in 16S rRNA + S-adenosyl-L-methionine = N(4)-methylcytidine(1402) in 16S rRNA + S-adenosyl-L-homocysteine + H(+). Its function is as follows. Specifically methylates the N4 position of cytidine in position 1402 (C1402) of 16S rRNA. The chain is Ribosomal RNA small subunit methyltransferase H from Clostridium botulinum (strain Eklund 17B / Type B).